Consider the following 360-residue polypeptide: Arginase, non-hepatic 1 (360 aa).

Mn(2+) is bound by residues H122, D145, H147, and D149. Substrate-binding positions include 147–151, 158–160, and D204; these read HADIN and SGN. 2 residues coordinate Mn(2+): D253 and D255. T267 and E298 together coordinate substrate.

This sequence belongs to the arginase family. In terms of assembly, homotrimer. The cofactor is Mn(2+). In terms of tissue distribution, expressed at differing tadpole stages in tail, intestine, hindlimb and trunk region. Most abundant in tadpole tail.

It carries out the reaction L-arginine + H2O = urea + L-ornithine. Its pathway is nitrogen metabolism; urea cycle; L-ornithine and urea from L-arginine: step 1/1. Its function is as follows. As well as its role in the urea cycle, may be involved in tissue remodeling. The polypeptide is Arginase, non-hepatic 1 (arg2-a) (Xenopus laevis (African clawed frog)).